We begin with the raw amino-acid sequence, 350 residues long: Glycolate oxidase subunit GlcE (350 aa).

Residues 1 to 173 enclose the FAD-binding PCMH-type domain; the sequence is MLRECDYSQA…TEISMKVLPR (173 aa).

The glycolate oxidase likely consists of three subunits, GlcD, GlcE and GlcF. It depends on FAD as a cofactor.

It is found in the cell inner membrane. The catalysed reaction is glycolate + A = glyoxylate + AH2. It carries out the reaction (R)-lactate + A = pyruvate + AH2. With respect to regulation, in vitro the glycolate oxidase activity is inhibited by the sulfhydryl inhibitors CuSO4 and PCMB, by KCN, but not by the metal complexing agent EDTA. Component of a complex that catalyzes the oxidation of glycolate to glyoxylate. Is required for E.coli to grow on glycolate as a sole source of carbon. Is also able to oxidize D-lactate ((R)-lactate) with a similar rate. Does not link directly to O(2), and 2,6-dichloroindophenol (DCIP) and phenazine methosulfate (PMS) can act as artificial electron acceptors in vitro, but the physiological molecule that functions as a primary electron acceptor during glycolate oxidation is unknown. This chain is Glycolate oxidase subunit GlcE, found in Escherichia coli (strain K12).